Consider the following 141-residue polypeptide: Nucleoside diphosphate kinase (141 aa).

The ATP site is built by Lys11, Phe59, Arg87, Thr93, Arg104, and Asn114. His117 serves as the catalytic Pros-phosphohistidine intermediate.

Belongs to the NDK family. In terms of assembly, homotetramer. The cofactor is Mg(2+).

It localises to the cytoplasm. It carries out the reaction a 2'-deoxyribonucleoside 5'-diphosphate + ATP = a 2'-deoxyribonucleoside 5'-triphosphate + ADP. The catalysed reaction is a ribonucleoside 5'-diphosphate + ATP = a ribonucleoside 5'-triphosphate + ADP. Functionally, major role in the synthesis of nucleoside triphosphates other than ATP. The ATP gamma phosphate is transferred to the NDP beta phosphate via a ping-pong mechanism, using a phosphorylated active-site intermediate. The sequence is that of Nucleoside diphosphate kinase from Variovorax paradoxus (strain S110).